The sequence spans 199 residues: UPF0637 protein LVIS_1261 (199 aa).

It belongs to the UPF0637 family.

In Levilactobacillus brevis (strain ATCC 367 / BCRC 12310 / CIP 105137 / JCM 1170 / LMG 11437 / NCIMB 947 / NCTC 947) (Lactobacillus brevis), this protein is UPF0637 protein LVIS_1261.